Reading from the N-terminus, the 390-residue chain is Endoglucanase gh5-1 (390 aa).

Positions 1-16 (MKATILASTFAAGALA) are cleaved as a signal peptide. The region spanning 17–52 (QSGAWGQCGGNGWSGATSCISGYACNYVNDWYSQCQ) is the CBM1 domain. N-linked (GlcNAc...) asparagine glycosylation is found at asparagine 157 and asparagine 261.

Belongs to the glycosyl hydrolase 5 (cellulase A) family. N-glycosylated.

The protein resides in the secreted. It carries out the reaction Endohydrolysis of (1-&gt;4)-beta-D-glucosidic linkages in cellulose, lichenin and cereal beta-D-glucans.. Functionally, endoglucanase that plays an important role in biomass degradation. Binds onto plant cell walls to participate in the hydrolysis of cellulose. This is Endoglucanase gh5-1 from Neurospora crassa (strain ATCC 24698 / 74-OR23-1A / CBS 708.71 / DSM 1257 / FGSC 987).